A 361-amino-acid chain; its full sequence is Zygote arrest protein 1 (361 aa).

Disordered regions lie at residues 68–129 (GPRP…PRSW) and 142–252 (GLSS…EQDK). Residues 116-128 (PRSPARAGRPPRS) are compositionally biased toward low complexity. Thr155 is modified (phosphothreonine). Over residues 238–252 (ASRDRASPQSTEQDK) the composition is skewed to basic and acidic residues. A 3CxxC-type zinc finger spans residues 263–346 (KYGYYHCKDC…RQDLCGRCKD (84 aa)).

It belongs to the ZAR1 family. As to quaternary structure, interacts with YBX2. Post-translationally, phosphorylation by CDK1 does not regulate formation of MARDO (mitochondria-associated ribonucleoprotein domain) membraneless compartment. In terms of processing, ubiquitinated and degradaded by the proteasome during oocyte meiotic maturation, leading to MARDO (mitochondria-associated ribonucleoprotein domain) membraneless compartment dissolution.

It is found in the cytoplasm. It localises to the cytoplasmic ribonucleoprotein granule. Functionally, mRNA-binding protein that mediates formation of MARDO (mitochondria-associated ribonucleoprotein domain), a membraneless compartment that stores maternal mRNAs in oocytes. MARDO assembly around mitochondria is directed by an increase in mitochondrial membrane potential during oocyte growth. Promotes formation of MARDO phase-separated membraneless compartment by undergoing liquid-liquid phase separation upon binding to maternal mRNAs. Binds to the 3'-UTR of maternal mRNAs. Maternal mRNAs stored in the MARDO are translationally repressed. Essential for female fertility and oocyte-to-embryo transition by coordinating maternal mRNA storage, translation and degradation. The chain is Zygote arrest protein 1 from Rattus norvegicus (Rat).